We begin with the raw amino-acid sequence, 555 residues long: Heterochromatin protein 1-binding protein 3 (555 aa).

An N-acetylalanine modification is found at A2. Residue S6 is modified to Phosphoserine. Residues K29–P134 are disordered. T51 carries the post-translational modification Phosphothreonine. Residues T51–P67 show a composition bias toward basic and acidic residues. A Glycyl lysine isopeptide (Lys-Gly) (interchain with G-Cter in SUMO2) cross-link involves residue K64. T85 carries the phosphothreonine modification. A Glycyl lysine isopeptide (Lys-Gly) (interchain with G-Cter in SUMO2) cross-link involves residue K97. Positions P100–K127 are enriched in basic and acidic residues. Phosphoserine is present on residues S142, S155, and S156. In terms of domain architecture, H15 1 spans P157 to Q232. N6-acetyllysine is present on K190. The disordered stretch occupies residues S227–E254. The span at K233 to R247 shows a compositional bias: basic residues. Phosphoserine occurs at positions 248 and 249. H15 domains follow at residues P255–K330 and L337–F413. K258 is covalently cross-linked (Glycyl lysine isopeptide (Lys-Gly) (interchain with G-Cter in SUMO2)). The tract at residues L422 to K555 is disordered. Residues D430–E452 are compositionally biased toward acidic residues. Phosphoserine occurs at positions 443, 444, and 448. The span at G491–R512 shows a compositional bias: basic residues. Low complexity predominate over residues P513–S532. Basic residues predominate over residues S545–K555.

Interacts (via PxVxL motif) with CBX5.

It is found in the nucleus. The protein localises to the chromosome. In terms of biological role, component of heterochromatin that maintains heterochromatin integrity during G1/S progression and regulates the duration of G1 phase to critically influence cell proliferative capacity. May play a role in hypoxia-induced oncogenesis. The chain is Heterochromatin protein 1-binding protein 3 (HP1BP3) from Bos taurus (Bovine).